The sequence spans 685 residues: Methionine--tRNA ligase (685 aa).

The 'HIGH' region signature appears at 12–22 (PYANGSIHLGH). Residues cysteine 143, cysteine 146, cysteine 156, and cysteine 159 each coordinate Zn(2+). A 'KMSKS' region motif is present at residues 339–343 (KMSKS). Lysine 342 lines the ATP pocket. The tRNA-binding domain maps to 582 to 685 (DFMKIDMRVA…AGAQPGDKVG (104 aa)).

It belongs to the class-I aminoacyl-tRNA synthetase family. MetG type 1 subfamily. Homodimer. It depends on Zn(2+) as a cofactor.

The protein localises to the cytoplasm. The enzyme catalyses tRNA(Met) + L-methionine + ATP = L-methionyl-tRNA(Met) + AMP + diphosphate. Functionally, is required not only for elongation of protein synthesis but also for the initiation of all mRNA translation through initiator tRNA(fMet) aminoacylation. The chain is Methionine--tRNA ligase from Neisseria meningitidis serogroup C (strain 053442).